The chain runs to 192 residues: Thymidine kinase (192 aa).

Residues 9-16 (GAMNSGKT) and 85-88 (DEAQ) contribute to the ATP site. Glutamate 86 (proton acceptor) is an active-site residue. The Zn(2+) site is built by cysteine 143, cysteine 146, cysteine 180, and histidine 183.

Belongs to the thymidine kinase family. In terms of assembly, homotetramer.

Its subcellular location is the cytoplasm. The catalysed reaction is thymidine + ATP = dTMP + ADP + H(+). The protein is Thymidine kinase of Lactiplantibacillus plantarum (strain ATCC BAA-793 / NCIMB 8826 / WCFS1) (Lactobacillus plantarum).